Reading from the N-terminus, the 778-residue chain is Endonuclease MutS2 (778 aa).

328-335 is an ATP binding site; that stretch reads GPNTGGKT. Residues 702 to 777 enclose the Smr domain; the sequence is LDLRGKRYEE…GSGATIVTFK (76 aa).

Belongs to the DNA mismatch repair MutS family. MutS2 subfamily. As to quaternary structure, homodimer. Binds to stalled ribosomes, contacting rRNA.

Endonuclease that is involved in the suppression of homologous recombination and thus may have a key role in the control of bacterial genetic diversity. In terms of biological role, acts as a ribosome collision sensor, splitting the ribosome into its 2 subunits. Detects stalled/collided 70S ribosomes which it binds and splits by an ATP-hydrolysis driven conformational change. Acts upstream of the ribosome quality control system (RQC), a ribosome-associated complex that mediates the extraction of incompletely synthesized nascent chains from stalled ribosomes and their subsequent degradation. Probably generates substrates for RQC. The polypeptide is Endonuclease MutS2 (Streptococcus pneumoniae (strain Taiwan19F-14)).